The chain runs to 246 residues: UPF0246 protein stu1967 (246 aa).

This sequence belongs to the UPF0246 family.

The chain is UPF0246 protein stu1967 from Streptococcus thermophilus (strain ATCC BAA-250 / LMG 18311).